We begin with the raw amino-acid sequence, 514 residues long: 1,25-dihydroxyvitamin D(3) 24-hydroxylase, mitochondrial (514 aa).

The transit peptide at M1 to S35 directs the protein to the mitochondrion. C462 is a heme binding site.

Belongs to the cytochrome P450 family. Heme is required as a cofactor.

Its subcellular location is the mitochondrion. The enzyme catalyses calcitriol + 2 reduced [adrenodoxin] + O2 + 2 H(+) = calcitetrol + 2 oxidized [adrenodoxin] + H2O. It carries out the reaction calcitetrol + 2 reduced [adrenodoxin] + O2 + 2 H(+) = (1S)-1,25-dihydroxy-24-oxocalciol + 2 oxidized [adrenodoxin] + 2 H2O. The catalysed reaction is (1S)-1,25-dihydroxy-24-oxocalciol + 2 reduced [adrenodoxin] + O2 + 2 H(+) = (1S)-1,23,25-trihydroxy-24-oxocalciol + 2 oxidized [adrenodoxin] + H2O. It catalyses the reaction (1S)-1,23-dihydroxy-24,25,26,27-tetranorcalciol + 2 reduced [adrenodoxin] + O2 + 2 H(+) = (1S)-1-hydroxy-23-oxo-24,25,26,27-tetranorcalciol + 2 oxidized [adrenodoxin] + 2 H2O. The enzyme catalyses (1S)-1-hydroxy-23-oxo-24,25,26,27-tetranorcalciol + 2 reduced [adrenodoxin] + O2 + H(+) = calcitroate + 2 oxidized [adrenodoxin] + H2O. It carries out the reaction calcidiol + 2 reduced [adrenodoxin] + O2 + 2 H(+) = secalciferol + 2 oxidized [adrenodoxin] + H2O. The catalysed reaction is secalciferol + 2 reduced [adrenodoxin] + O2 + 2 H(+) = 25-hydroxy-24-oxocalciol + 2 oxidized [adrenodoxin] + 2 H2O. It catalyses the reaction 25-hydroxy-24-oxocalciol + 2 reduced [adrenodoxin] + O2 + 2 H(+) = 23S,25-dihydroxy-24-oxocholecalciferol + 2 oxidized [adrenodoxin] + H2O. The enzyme catalyses 20S,23-dihydroxycholecalciferol + 2 reduced [adrenodoxin] + O2 + 2 H(+) = 20S,23,25-trihydroxycholecalciferol + 2 oxidized [adrenodoxin] + H2O. It carries out the reaction 20S,23-dihydroxycholecalciferol + 2 reduced [adrenodoxin] + O2 + 2 H(+) = 20S,23,24-trihydroxycholecalciferol + 2 oxidized [adrenodoxin] + H2O. The catalysed reaction is 20S-hydroxycholecalciferol + 2 reduced [adrenodoxin] + O2 + 2 H(+) = 20S,25-dihydroxycholecalciferol + 2 oxidized [adrenodoxin] + H2O. It catalyses the reaction 20S-hydroxycholecalciferol + 2 reduced [adrenodoxin] + O2 + 2 H(+) = 20S,24S-dihydroxycholecalciferol + 2 oxidized [adrenodoxin] + H2O. The enzyme catalyses 20S-hydroxycholecalciferol + 2 reduced [adrenodoxin] + O2 + 2 H(+) = 20S,24R-dihydroxycholecalciferol + 2 oxidized [adrenodoxin] + H2O. Its function is as follows. A cytochrome P450 monooxygenase with a key role in vitamin D catabolism and calcium homeostasis. Via C24-oxidation pathway, catalyzes the inactivation of both the vitamin D precursor calcidiol (25-hydroxyvitamin D(3)) and the active hormone calcitriol (1-alpha,25-dihydroxyvitamin D(3)). With initial hydroxylation at C-24 (via C24-oxidation pathway), performs a sequential 6-step oxidation of calcitriol leading to the formation of the biliary metabolite calcitroic acid. Hydroxylates at C-24 or C-25 other vitamin D active metabolites, such as CYP11A1-derived secosteroids 20S-hydroxycholecalciferol and 20S,23-dihydroxycholecalciferol. Mechanistically, uses molecular oxygen inserting one oxygen atom into a substrate, and reducing the second into a water molecule, with two electrons provided by NADPH via FDXR/adrenodoxin reductase and FDX1/adrenodoxin. This chain is 1,25-dihydroxyvitamin D(3) 24-hydroxylase, mitochondrial (Cyp24a1), found in Rattus norvegicus (Rat).